Consider the following 443-residue polypeptide: MVKERKTELVEGFRHSVPYINTHRGKTFVIMLGGEAIEHENFSSIVNDIGLLHSLGIRLVVVYGARPQIDANLAAHHHEPLYHKNIRVTDAKTLELVKQAAGTLQLDITARLSMSLNNTPLQGAHINVVSGNFIIAQPLGVDDGVDYCHSGRIRRIDEDALHRQLESGAIVLMGPVAVSVTGESFNLTSEEIATQLAIKLKAEKMIGFCSSQGVTNDDGDIVSELFPNEAQARVEAQEEKGDYNSGTVRFLRGAVKACRSGVRRCHLISYQEDGALLQELFSRDGIGTQIVMESAEQIRRATINDIGGILELIRPLEQQGILVRRSREQLEMEIDKFTIIQRDNTTIACAALYPFPEEKIGEMACVAVHPDYRSSSRGEVLLERIAAQAKQSGLSKLFVLTTRSIHWFQERGFTPVDIDLLPESKKQLYNYQRKSKVLMADLG.

Residues 296 to 443 (EQIRRATIND…KSKVLMADLG (148 aa)) enclose the N-acetyltransferase domain.

It belongs to the acetyltransferase family. ArgA subfamily. As to quaternary structure, homohexamer.

The protein resides in the cytoplasm. It carries out the reaction L-glutamate + acetyl-CoA = N-acetyl-L-glutamate + CoA + H(+). Its pathway is amino-acid biosynthesis; L-arginine biosynthesis; N(2)-acetyl-L-ornithine from L-glutamate: step 1/4. Feedback inhibition by L-arginine. This chain is Amino-acid acetyltransferase (argA), found in Shigella flexneri.